The following is a 495-amino-acid chain: MAVNVRDYIAENYGLFINGEFVKGSSDETIEVTNPATGETLSHITRAKDKDVDHAVEVAQEAFESWSLTSKSERAQMLRDIGDKLMAQKDKIAMIETLNNGKPIRETTAIDIPFAARHFHYFASVIETEEGTVNDIDKDTMSIVRHEPIGVVGAVVAWNFPMLLAAWKIAPAIAAGNTIVIQPSSSTPLSLLEVAKIFQEVLPKGVVNILTGKGSESGNAIFNHDGVDKLSFTGSTDVGYQVAEAAAKHLVPATLELGGKSANIILDDANLDLAVEGIQLGILFNQGEVCSAGSRLLVHEKIYDQLVPRLQEAFSNIKVGDPQDEATQMGSQTGKDQLDKIQSYIDVAKESDAQILAGGHRLTENGLDKGFFFEPTLIAVPDNHHKLAQEEIFGPVLTVIKVKDDQEAIDIANDSKYGLAGGVFSQNITRALNIAKAVRTGRIWINTYNQVPEGAPFGGYKKSGIGRETYKGALSNYQQVKNIYIDTSNALKGLY.

212–218 (GKGSESG) is an NAD(+) binding site. Residues Glu-256 and Cys-290 contribute to the active site.

It belongs to the aldehyde dehydrogenase family.

The catalysed reaction is an aldehyde + NAD(+) + H2O = a carboxylate + NADH + 2 H(+). The polypeptide is Putative aldehyde dehydrogenase AldA (aldA) (Staphylococcus aureus (strain bovine RF122 / ET3-1)).